The following is a 580-amino-acid chain: Benzoate--CoA ligase, peroxisomal (580 aa).

A Microbody targeting signal motif is present at residues 578 to 580; sequence SRL.

It belongs to the ATP-dependent AMP-binding enzyme family.

The protein resides in the peroxisome. It carries out the reaction benzoate + ATP + CoA = benzoyl-CoA + AMP + diphosphate. Benzoate--CoA ligase involved in benzoyloxyglucosinolate biosynthesis in seeds. Glucosinolates are secondary metabolites involved in pathogen and insect defense of cruciferous plants. The polypeptide is Benzoate--CoA ligase, peroxisomal (AAE20) (Arabidopsis thaliana (Mouse-ear cress)).